Here is a 307-residue protein sequence, read N- to C-terminus: 4-hydroxy-3-methylbut-2-enyl diphosphate reductase (307 aa).

Cysteine 13 contributes to the [4Fe-4S] cluster binding site. Residues histidine 42 and histidine 75 each coordinate (2E)-4-hydroxy-3-methylbut-2-enyl diphosphate. Dimethylallyl diphosphate is bound by residues histidine 42 and histidine 75. Isopentenyl diphosphate-binding residues include histidine 42 and histidine 75. Cysteine 97 contacts [4Fe-4S] cluster. Histidine 125 is a binding site for (2E)-4-hydroxy-3-methylbut-2-enyl diphosphate. Histidine 125 provides a ligand contact to dimethylallyl diphosphate. Histidine 125 serves as a coordination point for isopentenyl diphosphate. The Proton donor role is filled by glutamate 127. A (2E)-4-hydroxy-3-methylbut-2-enyl diphosphate-binding site is contributed by threonine 165. Residue cysteine 195 coordinates [4Fe-4S] cluster. Positions 223, 224, 225, and 267 each coordinate (2E)-4-hydroxy-3-methylbut-2-enyl diphosphate. Serine 223, serine 224, asparagine 225, and serine 267 together coordinate dimethylallyl diphosphate. Positions 223, 224, 225, and 267 each coordinate isopentenyl diphosphate.

It belongs to the IspH family. [4Fe-4S] cluster serves as cofactor.

It catalyses the reaction isopentenyl diphosphate + 2 oxidized [2Fe-2S]-[ferredoxin] + H2O = (2E)-4-hydroxy-3-methylbut-2-enyl diphosphate + 2 reduced [2Fe-2S]-[ferredoxin] + 2 H(+). The enzyme catalyses dimethylallyl diphosphate + 2 oxidized [2Fe-2S]-[ferredoxin] + H2O = (2E)-4-hydroxy-3-methylbut-2-enyl diphosphate + 2 reduced [2Fe-2S]-[ferredoxin] + 2 H(+). The protein operates within isoprenoid biosynthesis; dimethylallyl diphosphate biosynthesis; dimethylallyl diphosphate from (2E)-4-hydroxy-3-methylbutenyl diphosphate: step 1/1. It functions in the pathway isoprenoid biosynthesis; isopentenyl diphosphate biosynthesis via DXP pathway; isopentenyl diphosphate from 1-deoxy-D-xylulose 5-phosphate: step 6/6. In terms of biological role, catalyzes the conversion of 1-hydroxy-2-methyl-2-(E)-butenyl 4-diphosphate (HMBPP) into a mixture of isopentenyl diphosphate (IPP) and dimethylallyl diphosphate (DMAPP). Acts in the terminal step of the DOXP/MEP pathway for isoprenoid precursor biosynthesis. The chain is 4-hydroxy-3-methylbut-2-enyl diphosphate reductase from Chlamydia trachomatis serovar D (strain ATCC VR-885 / DSM 19411 / UW-3/Cx).